The following is a 366-amino-acid chain: tRNA 2-selenouridine synthase (366 aa).

Residues 12-136 (FLSGTPMMDV…MRGFLIDVIE (125 aa)) form the Rhodanese domain. Catalysis depends on Cys-95, which acts as the S-selanylcysteine intermediate.

It belongs to the SelU family. Monomer.

It carries out the reaction 5-methylaminomethyl-2-thiouridine(34) in tRNA + selenophosphate + (2E)-geranyl diphosphate + H2O + H(+) = 5-methylaminomethyl-2-selenouridine(34) in tRNA + (2E)-thiogeraniol + phosphate + diphosphate. The catalysed reaction is 5-methylaminomethyl-2-thiouridine(34) in tRNA + (2E)-geranyl diphosphate = 5-methylaminomethyl-S-(2E)-geranyl-thiouridine(34) in tRNA + diphosphate. It catalyses the reaction 5-methylaminomethyl-S-(2E)-geranyl-thiouridine(34) in tRNA + selenophosphate + H(+) = 5-methylaminomethyl-2-(Se-phospho)selenouridine(34) in tRNA + (2E)-thiogeraniol. The enzyme catalyses 5-methylaminomethyl-2-(Se-phospho)selenouridine(34) in tRNA + H2O = 5-methylaminomethyl-2-selenouridine(34) in tRNA + phosphate. Involved in the post-transcriptional modification of the uridine at the wobble position (U34) of tRNA(Lys), tRNA(Glu) and tRNA(Gln). Catalyzes the conversion of 2-thiouridine (S2U-RNA) to 2-selenouridine (Se2U-RNA). Acts in a two-step process involving geranylation of 2-thiouridine (S2U) to S-geranyl-2-thiouridine (geS2U) and subsequent selenation of the latter derivative to 2-selenouridine (Se2U) in the tRNA chain. The protein is tRNA 2-selenouridine synthase of Cupriavidus pinatubonensis (strain JMP 134 / LMG 1197) (Cupriavidus necator (strain JMP 134)).